The sequence spans 466 residues: Adenosylhomocysteinase (466 aa).

Positions 57, 132, and 192 each coordinate substrate. Position 193–195 (193–195 (TTT)) interacts with NAD(+). Substrate-binding residues include Lys-222 and Asp-226. NAD(+) contacts are provided by residues Asn-227, 256-261 (GYGDVG), Glu-279, Asn-314, 335-337 (IGH), and Asn-380.

Belongs to the adenosylhomocysteinase family. NAD(+) serves as cofactor.

It is found in the cytoplasm. It carries out the reaction S-adenosyl-L-homocysteine + H2O = L-homocysteine + adenosine. It functions in the pathway amino-acid biosynthesis; L-homocysteine biosynthesis; L-homocysteine from S-adenosyl-L-homocysteine: step 1/1. May play a key role in the regulation of the intracellular concentration of adenosylhomocysteine. The sequence is that of Adenosylhomocysteinase from Rhizobium leguminosarum bv. trifolii (strain WSM2304).